The primary structure comprises 333 residues: Plasminogen (333 aa).

The Kringle 5 domain occupies 4–83 (CMFGNGKGYR…LFDYCDVPQC (80 aa)). 9 cysteine pairs are disulfide-bonded: C4-C83, C25-C66, C54-C78, C90-C208, C100-C108, C130-C146, C222-C289, C252-C268, and C279-C307. Residues 104–331 (VVGGCVANPH…FVTWIEGIMR (228 aa)) form the Peptidase S1 domain. The residue at position 120 (S120) is a Phosphoserine. Active-site charge relay system residues include H145 and D188. S283 functions as the Charge relay system in the catalytic mechanism.

This sequence belongs to the peptidase S1 family. Plasminogen subfamily. In terms of assembly, interacts with CSPG4 and AMOT. Interacts (via the Kringle domains) with HRG; the interaction tethers PLG to the cell surface and enhances its activation. Interacts (via Kringle 4 domain) with ADA; the interaction stimulates PLG activation when in complex with DPP4. Angiostatin: Interacts with ATP5F1A; the interaction inhibits most of the angiogenic effects of angiostatin.

It localises to the secreted. It carries out the reaction Preferential cleavage: Lys-|-Xaa &gt; Arg-|-Xaa, higher selectivity than trypsin. Converts fibrin into soluble products.. Converted into plasmin by plasminogen activators, both plasminogen and its activator being bound to fibrin. Activated with urokinase and high concentrations of streptokinase. Its function is as follows. Plasmin dissolves the fibrin of blood clots and acts as a proteolytic factor in a variety of other processes including embryonic development, tissue remodeling, tumor invasion, and inflammation. In ovulation, weakens the walls of the Graafian follicle. It activates the urokinase-type plasminogen activator, collagenases and several complement zymogens, such as C1, C4 and C5. Cleavage of fibronectin and laminin leads to cell detachment and apoptosis. Also cleaves fibrin, thrombospondin and von Willebrand factor. Its role in tissue remodeling and tumor invasion may be modulated by CSPG4. Binds to cells. In Canis lupus familiaris (Dog), this protein is Plasminogen (PLG).